Consider the following 491-residue polypeptide: Glutamyl-tRNA(Gln) amidotransferase subunit A (491 aa).

Catalysis depends on charge relay system residues K78 and S158. The active-site Acyl-ester intermediate is the S182.

This sequence belongs to the amidase family. GatA subfamily. Heterotrimer of A, B and C subunits.

The enzyme catalyses L-glutamyl-tRNA(Gln) + L-glutamine + ATP + H2O = L-glutaminyl-tRNA(Gln) + L-glutamate + ADP + phosphate + H(+). Functionally, allows the formation of correctly charged Gln-tRNA(Gln) through the transamidation of misacylated Glu-tRNA(Gln) in organisms which lack glutaminyl-tRNA synthetase. The reaction takes place in the presence of glutamine and ATP through an activated gamma-phospho-Glu-tRNA(Gln). This chain is Glutamyl-tRNA(Gln) amidotransferase subunit A, found in Bradyrhizobium sp. (strain ORS 278).